We begin with the raw amino-acid sequence, 613 residues long: Putative two-component response regulator ARR21 (613 aa).

In terms of domain architecture, Response regulatory spans 17–131; the sequence is NVMVVDDDHV…DLTKIYQFAL (115 aa). D68 bears the 4-aspartylphosphate mark. Residues 178-195 show a composition bias toward polar residues; the sequence is KSDSRTVNSTNGSCVSTD. Residues 178–223 form a disordered region; that stretch reads KSDSRTVNSTNGSCVSTDGSRKNRKRKPNGGPSDDGESMSQPAKKK. Residues 221-224 carry the Nuclear localization signal motif; sequence KKKK. Residues 224 to 274 constitute a DNA-binding region (myb-like GARP); that stretch reads KIQWTDSLHDLFLQAIRHIGLDKAVPKKILAFMSVPYLTRENVASHLQKYR.

This sequence belongs to the ARR family. Type-B subfamily. In terms of assembly, binds the target DNA as a monomer. In terms of processing, two-component system major event consists of a His-to-Asp phosphorelay between a sensor histidine kinase (HK) and a response regulator (RR). In plants, the His-to-Asp phosphorelay involves an additional intermediate named Histidine-containing phosphotransfer protein (HPt). This multistep phosphorelay consists of a His-Asp-His-Asp sequential transfer of a phosphate group between first a His and an Asp of the HK protein, followed by the transfer to a conserved His of the HPt protein and finally the transfer to an Asp in the receiver domain of the RR protein. Mainly expressed in siliques. Also found in germinating seedlings, stems, flowers and roots, but not in rosette leaves.

It localises to the nucleus. Functionally, putative transcriptional activator that binds specifically to the DNA sequence 5'-[AG]GATT-3'. Functions as a response regulator involved in His-to-Asp phosphorelay signal transduction system. Phosphorylation of the Asp residue in the receiver domain activates the ability of the protein to promote the transcription of target genes. Could directly activate some type-A response regulators in response to cytokinins. In Arabidopsis thaliana (Mouse-ear cress), this protein is Putative two-component response regulator ARR21 (ARR21).